We begin with the raw amino-acid sequence, 256 residues long: DNA polymerase sliding clamp 2 (256 aa).

Belongs to the PCNA family. As to quaternary structure, homotrimer. The subunits circularize to form a toroid; DNA passes through its center. Replication factor C (RFC) is required to load the toroid on the DNA.

Functionally, sliding clamp subunit that acts as a moving platform for DNA processing. Responsible for tethering the catalytic subunit of DNA polymerase and other proteins to DNA during high-speed replication. The protein is DNA polymerase sliding clamp 2 of Pyrobaculum aerophilum (strain ATCC 51768 / DSM 7523 / JCM 9630 / CIP 104966 / NBRC 100827 / IM2).